A 201-amino-acid polypeptide reads, in one-letter code: Ribonuclease HII (201 aa).

The RNase H type-2 domain occupies 14-201; sequence NLIAGVDEVG…KPVKRILGIE (188 aa). Residues Asp20, Glu21, and Asp112 each contribute to the a divalent metal cation site.

It belongs to the RNase HII family. Mn(2+) serves as cofactor. Requires Mg(2+) as cofactor.

It is found in the cytoplasm. The enzyme catalyses Endonucleolytic cleavage to 5'-phosphomonoester.. Endonuclease that specifically degrades the RNA of RNA-DNA hybrids. This is Ribonuclease HII from Photobacterium profundum (strain SS9).